Reading from the N-terminus, the 388-residue chain is MRYLTAGESHGPSLTAIIEGIPAGLKLSAKDINEDLKRRQGGYGRGNRMKIETDQVIISSGVRHGKTLGSPITLTVTNKDHSKWLDIMSVEDIEERLKQKRRIKHPRPGHADLVGGIKYRFDDLRNALERSSARETTMRVAIGAIAKRILKEIGIEIANHIVVFGGKEITVPDKLTVQQIKVLSSQSQVAIVNPSFEQEIKDYIDSVKKAGDTIGGVIETIVGGVPVGLGSYVHWDRKLDAKIAQAVVSINAFKGVEFGLGFKSGFLKGSQVMDSISWTKDQGYIRQSNNLGGFEGGMTNGEPIIVRGVMKPIPTLYKPLMSVDIDTHEPYRATVERSDPTALPAAGVVMEAVVATVLVTEVLEKFSSDNMYELKEAVKLYRNYVNHF.

Residues R39 and R45 each coordinate NADP(+). FMN contacts are provided by residues R130 to S132, N251 to A252, G296, K311 to T315, and R337.

The protein belongs to the chorismate synthase family. As to quaternary structure, homotetramer. FMNH2 is required as a cofactor.

It carries out the reaction 5-O-(1-carboxyvinyl)-3-phosphoshikimate = chorismate + phosphate. Its pathway is metabolic intermediate biosynthesis; chorismate biosynthesis; chorismate from D-erythrose 4-phosphate and phosphoenolpyruvate: step 7/7. In terms of biological role, catalyzes the anti-1,4-elimination of the C-3 phosphate and the C-6 proR hydrogen from 5-enolpyruvylshikimate-3-phosphate (EPSP) to yield chorismate, which is the branch point compound that serves as the starting substrate for the three terminal pathways of aromatic amino acid biosynthesis. This reaction introduces a second double bond into the aromatic ring system. This Streptococcus agalactiae serotype III (strain NEM316) protein is Chorismate synthase.